Here is a 357-residue protein sequence, read N- to C-terminus: Aspartate carbamoyltransferase catalytic subunit (357 aa).

The segment covering 1 to 15 (MSNSIDSQSLPTVSP) has biased composition (polar residues). Residues 1-21 (MSNSIDSQSLPTVSPTDYARF) are disordered. Carbamoyl phosphate is bound by residues R97 and T98. K125 is an L-aspartate binding site. 3 residues coordinate carbamoyl phosphate: R147, H177, and Q180. Residues R211 and R266 each coordinate L-aspartate. Carbamoyl phosphate contacts are provided by G307 and P308.

It belongs to the aspartate/ornithine carbamoyltransferase superfamily. ATCase family. In terms of assembly, heterododecamer (2C3:3R2) of six catalytic PyrB chains organized as two trimers (C3), and six regulatory PyrI chains organized as three dimers (R2).

The catalysed reaction is carbamoyl phosphate + L-aspartate = N-carbamoyl-L-aspartate + phosphate + H(+). The protein operates within pyrimidine metabolism; UMP biosynthesis via de novo pathway; (S)-dihydroorotate from bicarbonate: step 2/3. Its function is as follows. Catalyzes the condensation of carbamoyl phosphate and aspartate to form carbamoyl aspartate and inorganic phosphate, the committed step in the de novo pyrimidine nucleotide biosynthesis pathway. The chain is Aspartate carbamoyltransferase catalytic subunit from Psychrobacter cryohalolentis (strain ATCC BAA-1226 / DSM 17306 / VKM B-2378 / K5).